The following is a 546-amino-acid chain: DNA ligase (546 aa).

Residue E244 coordinates ATP. K246 functions as the N6-AMP-lysine intermediate in the catalytic mechanism. Residues R251, R266, E295, F334, R405, and K411 each coordinate ATP.

Belongs to the ATP-dependent DNA ligase family. Mg(2+) serves as cofactor.

The catalysed reaction is ATP + (deoxyribonucleotide)n-3'-hydroxyl + 5'-phospho-(deoxyribonucleotide)m = (deoxyribonucleotide)n+m + AMP + diphosphate.. Functionally, DNA ligase that seals nicks in double-stranded DNA during DNA replication, DNA recombination and DNA repair. In Methanocorpusculum labreanum (strain ATCC 43576 / DSM 4855 / Z), this protein is DNA ligase.